The primary structure comprises 146 residues: MSAALSRDATLLAFDYGEKRIGVAVGNLLTRTARALVIVRNLNREHRFKAVGELIAEWKPDALVVGLPLHPDGAPHEMTQRAMRFGNQLNGRFNLPVSWVDERYSSVEARAGLRARGDAADRVDAEAARVILQQYLDGLPDHHEFN.

This sequence belongs to the YqgF nuclease family.

It is found in the cytoplasm. Could be a nuclease involved in processing of the 5'-end of pre-16S rRNA. In Burkholderia mallei (strain SAVP1), this protein is Putative pre-16S rRNA nuclease.